Reading from the N-terminus, the 191-residue chain is Rho-related GTP-binding protein RhoH (191 aa).

Position 11–18 (11–18 (GDSAVGKT)) interacts with GTP. Positions 33 to 41 (YKPTVYENT) match the Effector region motif. A GTP-binding site is contributed by 58–62 (DTAGN). Positions 73–86 (YQQADVVLMCYSVA) are interaction with ZAP70. 116 to 119 (TQTD) serves as a coordination point for GTP. Residue Cys188 is modified to Cysteine methyl ester. The S-geranylgeranyl cysteine moiety is linked to residue Cys188. A propeptide spans 189-191 (KIL) (removed in mature form).

Belongs to the small GTPase superfamily. Rho family. As to quaternary structure, interacts with GDI1 and GDI2. Interacts with ZAP70 (via SH2 domains) and the interaction is enhanced by its phosphorylation by LCK. Interacts with SYK and the interaction is enhanced by its phosphorylation by FYN. In terms of processing, phosphorylated on tyrosine by LCK. Phosphorylated by FYN. Phosphorylation enhances the interactions with ZAP70 and SYK and is critical for its function in thymocyte development.

It localises to the cytoplasm. It is found in the cell membrane. Its function is as follows. Binds GTP but lacks intrinsic GTPase activity and is resistant to Rho-specific GTPase-activating proteins. Inhibits the activation of NF-kappa-B by TNF and IKKB and the activation of CRK/p38 by TNF. Inhibits activities of RAC1, RHOA and CDC42. Negatively regulates leukotriene production in neutrophils. Negative regulator of hematopoietic progenitor cell proliferation, survival and migration. Critical regulator of thymocyte development and T-cell antigen receptor (TCR) signaling by mediating recruitment and activation of ZAP70. Required for phosphorylation of CD3Z, membrane translocation of ZAP70 and subsequent activation of the ZAP70-mediated pathways. Essential for efficient beta-selection and positive selection by promoting the ZAP70-dependent phosphorylation of the LAT signalosome during pre-TCR and TCR signaling. Crucial for thymocyte maturation during DN3 to DN4 transition and during positive selection. Plays critical roles in mast cell function by facilitating phosphorylation of SYK in Fc epsilon RI-mediated signal transduction. Essential for the phosphorylation of LAT, LCP2, PLCG1 and PLCG2 and for Ca(2+) mobilization in mast cells. The chain is Rho-related GTP-binding protein RhoH (RHOH) from Bos taurus (Bovine).